The chain runs to 259 residues: Small ribosomal subunit protein uS2 (259 aa).

The tract at residues 232-259 is disordered; it reads KAMEAEETKAAEKAVETEAKEETPQEAK.

This sequence belongs to the universal ribosomal protein uS2 family.

The protein is Small ribosomal subunit protein uS2 of Maridesulfovibrio salexigens (strain ATCC 14822 / DSM 2638 / NCIMB 8403 / VKM B-1763) (Desulfovibrio salexigens).